The primary structure comprises 384 residues: Carbamoyl phosphate synthase small chain (384 aa).

The tract at residues 1–189 (MSKSALLVLE…GLPEAKDDSE (189 aa)) is CPSase. L-glutamine-binding residues include Ser47, Gly241, and Gly243. The region spanning 193–380 (HVVAYDFGAK…IELIKLSVNE (188 aa)) is the Glutamine amidotransferase type-1 domain. The active-site Nucleophile is the Cys269. L-glutamine is bound by residues Leu270, Gln273, Asn311, Gly313, and Phe314. Catalysis depends on residues His353 and Glu355.

Belongs to the CarA family. As to quaternary structure, composed of two chains; the small (or glutamine) chain promotes the hydrolysis of glutamine to ammonia, which is used by the large (or ammonia) chain to synthesize carbamoyl phosphate. Tetramer of heterodimers (alpha,beta)4.

It catalyses the reaction hydrogencarbonate + L-glutamine + 2 ATP + H2O = carbamoyl phosphate + L-glutamate + 2 ADP + phosphate + 2 H(+). The enzyme catalyses L-glutamine + H2O = L-glutamate + NH4(+). It functions in the pathway amino-acid biosynthesis; L-arginine biosynthesis; carbamoyl phosphate from bicarbonate: step 1/1. The protein operates within pyrimidine metabolism; UMP biosynthesis via de novo pathway; (S)-dihydroorotate from bicarbonate: step 1/3. Its function is as follows. Small subunit of the glutamine-dependent carbamoyl phosphate synthetase (CPSase). CPSase catalyzes the formation of carbamoyl phosphate from the ammonia moiety of glutamine, carbonate, and phosphate donated by ATP, constituting the first step of 2 biosynthetic pathways, one leading to arginine and/or urea and the other to pyrimidine nucleotides. The small subunit (glutamine amidotransferase) binds and cleaves glutamine to supply the large subunit with the substrate ammonia. This chain is Carbamoyl phosphate synthase small chain, found in Photobacterium profundum (strain SS9).